Reading from the N-terminus, the 712-residue chain is Patatin-like phospholipase domain-containing protein AFUA_1G04970 (712 aa).

Basic and acidic residues predominate over residues 1-13 (MTSDEKSATRDIY). The interval 1-20 (MTSDEKSATRDIYDPNTLPD) is disordered. The helical transmembrane segment at 85–105 (WPFLFTVFAWITVLGFAYTLT) threads the bilayer. The PNPLA domain occupies 275-466 (LCLSGGATFA…RTDIPIKALN (192 aa)). A GXSXG motif is present at residues 306–310 (GTSGG). The active-site Nucleophile is serine 308. Aspartate 453 functions as the Proton acceptor in the catalytic mechanism. The segment at 628-688 (RRRQDRAQEH…PDARRSSMFE (61 aa)) is disordered. Composition is skewed to basic and acidic residues over residues 632 to 646 (DRAQ…ERLD) and 652 to 664 (RQSD…HYAE). Positions 667–676 (DSLSATSSRP) are enriched in polar residues. Basic and acidic residues predominate over residues 677–688 (HTPDARRSSMFE).

The protein belongs to the PLPL family.

The protein resides in the membrane. Its function is as follows. Probable lipid hydrolase. In Aspergillus fumigatus (strain ATCC MYA-4609 / CBS 101355 / FGSC A1100 / Af293) (Neosartorya fumigata), this protein is Patatin-like phospholipase domain-containing protein AFUA_1G04970.